The sequence spans 298 residues: Aclacinomycin methylesterase RdmC (298 aa).

The AB hydrolase-1 domain maps to 24-277 (PALLLVMGGN…LAEIPGMGHA (254 aa)). Catalysis depends on residues Ser102, Asp248, and His276.

It belongs to the AB hydrolase superfamily. Hydrolase RdmC family. In terms of assembly, monomer.

It catalyses the reaction aclacinomycin T + H2O = 15-demethylaclacinomycin T + methanol. Its pathway is antibiotic biosynthesis; aclacinomycin biosynthesis. Its function is as follows. Involved in the biosynthesis of the anthracycline aclacinomycin which is an aromatic polyketide antibiotic that exhibits high cytotoxicity and is widely applied in the chemotherapy of a variety of cancers. Catalyzes the removal of the methoxy group from the C-15 position of aclacinomycin T and A to yield 15-demethoxyaclacinomycin T and A, respectively. This Streptomyces purpurascens protein is Aclacinomycin methylesterase RdmC (rdmC).